A 169-amino-acid chain; its full sequence is Keratin-associated protein 9-7 (169 aa).

17 repeat units span residues 8–12, 13–17, 32–36, 37–41, 46–50, 51–55, 56–60, 61–65, 75–79, 80–84, 85–89, 90–94, 100–104, 139–143, 144–148, 149–153, and 163–167. Residues 8 to 167 are 17 X 5 AA repeats of C-C-[VGSREQH]-[SQTPN]-[STPAI]; that stretch reads CCQPTCCRTT…TCVTSCCQPA (160 aa).

Belongs to the KRTAP type 9 family. In terms of assembly, interacts with hair keratins.

In terms of biological role, in the hair cortex, hair keratin intermediate filaments are embedded in an interfilamentous matrix, consisting of hair keratin-associated proteins (KRTAP), which are essential for the formation of a rigid and resistant hair shaft through their extensive disulfide bond cross-linking with abundant cysteine residues of hair keratins. The matrix proteins include the high-sulfur and high-glycine-tyrosine keratins. The protein is Keratin-associated protein 9-7 of Homo sapiens (Human).